A 777-amino-acid polypeptide reads, in one-letter code: Hepatocyte growth factor-regulated tyrosine kinase substrate (777 aa).

The region spanning 15-143 is the VHS domain; the sequence is ATSQLLLETD…IMKVEGHVFP (129 aa). The segment at 160 to 220 adopts an FYVE-type zinc-finger fold; it reads WVDAEECHRC…VCEPCYEQLN (61 aa). Residues cysteine 166, cysteine 169, cysteine 182, cysteine 185, cysteine 190, and cysteine 193 each coordinate Zn(2+). An N6-acetyllysine modification is found at lysine 207. 2 residues coordinate Zn(2+): cysteine 212 and cysteine 215. A Phosphotyrosine modification is found at tyrosine 216. A disordered region spans residues 223 to 319; sequence AEGKATSTTE…SPVNSSAPLA (97 aa). Positions 225-543 are interaction with SNX1; the sequence is GKATSTTELP…QRLQEQEKER (319 aa). In terms of domain architecture, UIM spans 258-277; that stretch reads QEEEELQLALALSQSEAEEK. Low complexity predominate over residues 290–311; the sequence is PKAEPMPSASSAPPASSLYSSP. A phosphotyrosine mark is found at tyrosine 308, tyrosine 329, and tyrosine 334. Positions 338 to 407 are disordered; it reads KQEEARKSPT…NGESEESHEQ (70 aa). The segment at 445–543 is interaction with SNAP25 and TRAK2; that stretch reads SINGMHPQLL…QRLQEQEKER (99 aa). Positions 454 to 572 are interaction with STAM; the sequence is LELLNQLDER…FPLPYAQLQA (119 aa). The interval 480–777 is interaction with NF2; the sequence is ARGALSALRE…GSEAQLISFD (298 aa). Position 551 is an N6-succinyllysine (lysine 551). Residues 718 to 777 are disordered; the sequence is LPSQDASLPPQQPYIAGQQPMYQQMAPSGGPPQQQPPVAQQPQAQGPPAQGSEAQLISFD. Low complexity predominate over residues 753–768; it reads PPVAQQPQAQGPPAQG.

Component of the ESCRT-0 complex composed of STAM or STAM2 and HGS. Part of a complex at least composed of HSG, STAM2 (or probably STAM) and EPS15. Interacts with STAM. Interacts with STAM2. Interacts with EPS15; the interaction is direct, calcium-dependent and inhibited by SNAP25. Identified in a complex with STAM and LITAF. Found in a complex with STAM and E3 ligase ITCH and DTX3L. Interacts with E3 ligase DTX3L; the interaction brings together STAM and HSG, promotes their recruitment to early endosomes and decreases STAM and HGS ubiquitination by ITCH. Interacts with NF2; the interaction is direct. Interacts with ubiquitin; the interaction is direct. Interacts with VPS37C. Interacts with SMAD1, SMAD2 and SMAD3. Interacts with TSG101; the interaction mediates the association with the ESCRT-I complex. Interacts with SNAP25; the interaction is direct and decreases with addition of increasing concentrations of free calcium. Interacts with SNX1; the interaction is direct. Component of a 550 kDa membrane complex at least composed of HGS and SNX1 but excluding EGFR. Interacts with TRAK1. Interacts with TRAK2. Component of the CART complex, at least composed of ACTN4, HGS/HRS, MYO5B and TRIM3. Interacts (via UIM domain) with UBQLN1 (via ubiquitin-like domain). Interacts with ARRDC3. Identified in a complex containing at least ARRDC4, AVPR2 and HGS. Interacts with LAPTM4B; promotes HGS ubiquitination. Post-translationally, phosphorylated on Tyr-334. A minor site of phosphorylation on Tyr-329 is detected. Phosphorylation occurs in response to EGF, IL-2, GM-CSF and HGF. In terms of processing, ubiquitinated. Ubiquitinated by ITCH. In terms of tissue distribution, ubiquitous expression in adult and fetal tissues with higher expression in testis and peripheral blood leukocytes.

Its subcellular location is the cytoplasm. The protein resides in the early endosome membrane. It localises to the endosome. It is found in the multivesicular body membrane. Functionally, involved in intracellular signal transduction mediated by cytokines and growth factors. When associated with STAM, it suppresses DNA signaling upon stimulation by IL-2 and GM-CSF. Could be a direct effector of PI3-kinase in vesicular pathway via early endosomes and may regulate trafficking to early and late endosomes by recruiting clathrin. May concentrate ubiquitinated receptors within clathrin-coated regions. Involved in down-regulation of receptor tyrosine kinase via multivesicular body (MVBs) when complexed with STAM (ESCRT-0 complex). The ESCRT-0 complex binds ubiquitin and acts as a sorting machinery that recognizes ubiquitinated receptors and transfers them to further sequential lysosomal sorting/trafficking processes. May contribute to the efficient recruitment of SMADs to the activin receptor complex. Involved in receptor recycling via its association with the CART complex, a multiprotein complex required for efficient transferrin receptor recycling but not for EGFR degradation. This is Hepatocyte growth factor-regulated tyrosine kinase substrate (HGS) from Homo sapiens (Human).